We begin with the raw amino-acid sequence, 417 residues long: Probable phosphoglycerate kinase (417 aa).

(2R)-3-phosphoglycerate contacts are provided by V23, D24, F25, N26, Q38, R39, S62, H63, G65, R66, L121, R122, H169, and R170. An ADP-binding site is contributed by G213. CDP is bound at residue G213. Positions 214 and 215 each coordinate AMP. Residue A214 participates in ATP binding. Position 214 (A214) interacts with Mg(2+). Mg(2+)-binding residues include A217 and D218. Position 218 (D218) interacts with CDP. Position 219 (K219) interacts with AMP. An ATP-binding site is contributed by K219. G237 contacts ADP. CDP is bound at residue G237. AMP-binding residues include G238 and G312. G238 and G312 together coordinate ATP. CDP-binding residues include G337, A339, and F342. F342 serves as a coordination point for ADP. E343 provides a ligand contact to AMP. Residues E343, D374, and T375 each coordinate ATP. D374 is a binding site for Mg(2+).

This sequence belongs to the phosphoglycerate kinase family. In terms of assembly, monomer. Mg(2+) serves as cofactor.

The protein resides in the cytoplasm. It carries out the reaction (2R)-3-phosphoglycerate + ATP = (2R)-3-phospho-glyceroyl phosphate + ADP. It participates in carbohydrate degradation; glycolysis; pyruvate from D-glyceraldehyde 3-phosphate: step 2/5. This is Probable phosphoglycerate kinase (pgk-1) from Caenorhabditis elegans.